Consider the following 156-residue polypeptide: uncharacterized protein (156 aa).

This is an uncharacterized protein from Saccharomyces cerevisiae (strain ATCC 204508 / S288c) (Baker's yeast).